Reading from the N-terminus, the 729-residue chain is Denticleless protein homolog (729 aa).

M1 bears the N-acetylmethionine mark. WD repeat units follow at residues 47–89 (GVPV…SKKT), 96–135 (AHWN…LMGT), and 138–178 (GHQC…KDGF). The DDB1-binding motif signature appears at 168-171 (WDTR). Polar residues predominate over residues 189–198 (HNTADKQTPS). Residues 189–212 (HNTADKQTPSKPKKKQNSKGLAPA) form a disordered region. T196 carries the phosphothreonine modification. The Nuclear localization signal motif lies at 197–203 (PSKPKKK). WD repeat units follow at residues 214–253 (DSQQ…TAYR), 269–308 (TRKL…TSPV), 313–354 (GHQN…HPPT), and 358–398 (GHSQ…EEKP). The DDB1-binding motif motif lies at 243-246 (WDLR). S409 and S425 each carry phosphoserine. 2 disordered regions span residues 416–445 (KACP…SSPS) and 460–491 (PSST…VSPK). Residues 427–445 (STPAKAPRAKSSPSISSPS) show a composition bias toward low complexity. A compositionally biased stretch (polar residues) spans 460–475 (PSSTPTFSVKTTPATT). T463 is subject to Phosphothreonine; by CDK1 and CDK2. Residues 476 to 491 (RSSVSRRGSISSVSPK) are compositionally biased toward low complexity. S484, S489, S494, and S511 each carry phosphoserine. Residues 504–546 (VTRTPSSSPPVTPPASETKISSPRKALIPVSQKSSQADACSES) are disordered. T515 carries the post-translational modification Phosphothreonine. S556 is modified (phosphoserine). A compositionally biased stretch (polar residues) spans 596–607 (VLSQDSEGPTKS). The tract at residues 596 to 705 (VLSQDSEGPT…GPVTITPSSM (110 aa)) is disordered. Composition is skewed to low complexity over residues 630 to 645 (EGCG…CGEG) and 674 to 688 (SSPR…SSRR). Phosphoserine is present on residues S675 and S678. A phosphothreonine mark is found at T683 and T701.

Belongs to the WD repeat cdt2 family. In terms of assembly, component of the DCX(DTL) E3 ubiquitin ligase complex (also called CRL4(CDT2)), at least composed of CUL4 (CUL4A or CUL4B), DDB1, DTL/CDT2 and RBX1. Interacts with CDKN1A and DDB1. Interacts with FBXO11; SCF(FBXWO11) controls DTL stability but DCX(DTL) does not control FBXO11 stability. Interacts with CRY1. Ubiquitinated by the anaphase promoting complex/cyclosome (APC/C). Autoubiquitinated through 'Lys-48'-polyubiquitin chains in a PCNA-independent reaction, allowing proteasomal turnover. Polyubiquitinated by SCF(FBXO11) when not phosphorylated, leading to its degradation. A tight regulation of the polyubiquitination by SCF(FBXO11) is involved in the control of different processes such as TGF-beta signaling, cell cycle progression and exit. In terms of processing, phosphorylated at Thr-463 by CDK1/Cyclin B and CDK2/Cycnlin A but not by CDK2/Cyclin E, MAPK1 or PLK1. Phosphorylation at Thr-463 inhibits the interaction with FBXO11 and decreases upon cell cycle exit induced by TGF-beta or serum starvation.

The protein resides in the nucleus. It is found in the nucleus membrane. It localises to the cytoplasm. The protein localises to the cytoskeleton. Its subcellular location is the microtubule organizing center. The protein resides in the centrosome. It is found in the chromosome. The protein operates within protein modification; protein ubiquitination. Functionally, substrate-specific adapter of a DCX (DDB1-CUL4-X-box) E3 ubiquitin-protein ligase complex required for cell cycle control, DNA damage response and translesion DNA synthesis. The DCX(DTL) complex, also named CRL4(CDT2) complex, mediates the polyubiquitination and subsequent degradation of CDT1, CDKN1A/p21(CIP1), FBH1, KMT5A and SDE2. CDT1 degradation in response to DNA damage is necessary to ensure proper cell cycle regulation of DNA replication. CDKN1A/p21(CIP1) degradation during S phase or following UV irradiation is essential to control replication licensing. KMT5A degradation is also important for a proper regulation of mechanisms such as TGF-beta signaling, cell cycle progression, DNA repair and cell migration. Most substrates require their interaction with PCNA for their polyubiquitination: substrates interact with PCNA via their PIP-box, and those containing the 'K+4' motif in the PIP box, recruit the DCX(DTL) complex, leading to their degradation. In undamaged proliferating cells, the DCX(DTL) complex also promotes the 'Lys-164' monoubiquitination of PCNA, thereby being involved in PCNA-dependent translesion DNA synthesis. The DDB1-CUL4A-DTL E3 ligase complex regulates the circadian clock function by mediating the ubiquitination and degradation of CRY1. The polypeptide is Denticleless protein homolog (Dtl) (Mus musculus (Mouse)).